The primary structure comprises 349 residues: Soluble TNF receptor II (349 aa).

An N-terminal signal peptide occupies residues 1-19 (MRSVLYSYILFLSCIIING). TNFR-Cys repeat units follow at residues 31–65 (KCKD…NTQC) and 67–108 (PCGS…NRIC). 6 disulfides stabilise this stretch: Cys-32/Cys-43, Cys-44/Cys-57, Cys-47/Cys-65, Cys-68/Cys-83, Cys-86/Cys-100, and Cys-90/Cys-108. Asn-101, Asn-190, Asn-249, Asn-277, and Asn-313 each carry an N-linked (GlcNAc...) asparagine; by host glycan.

This sequence belongs to the orthopoxvirus OPG002 family.

It localises to the secreted. In terms of biological role, inhibits host immune defense by binding to host TNF and various chemokines in the extracellular space. Binds host CC chemokines (beta chemokines) and CXC chemokines (alpha chemokines). The protein is Soluble TNF receptor II (OPG002) of Monkeypox virus.